We begin with the raw amino-acid sequence, 100 residues long: NADH-quinone oxidoreductase subunit K (100 aa).

Transmembrane regions (helical) follow at residues 4–24, 29–49, and 60–80; these read TSYY…GVLI, LVLF…LVTF, and IVVF…LALL.

The protein belongs to the complex I subunit 4L family. As to quaternary structure, NDH-1 is composed of 14 different subunits. Subunits NuoA, H, J, K, L, M, N constitute the membrane sector of the complex.

Its subcellular location is the cell membrane. It carries out the reaction a quinone + NADH + 5 H(+)(in) = a quinol + NAD(+) + 4 H(+)(out). In terms of biological role, NDH-1 shuttles electrons from NADH, via FMN and iron-sulfur (Fe-S) centers, to quinones in the respiratory chain. The immediate electron acceptor for the enzyme in this species is believed to be ubiquinone. Couples the redox reaction to proton translocation (for every two electrons transferred, four hydrogen ions are translocated across the cytoplasmic membrane), and thus conserves the redox energy in a proton gradient. The chain is NADH-quinone oxidoreductase subunit K from Roseiflexus sp. (strain RS-1).